The following is a 190-amino-acid chain: FUN14 domain-containing protein 2 (190 aa).

The segment covering 1–13 has biased composition (polar residues); that stretch reads METSTQRTGSHLA. Residues 1–31 are disordered; that stretch reads METSTQRTGSHLAQTAAARHSASSRGEAARV. The Cytoplasmic segment spans residues 1 to 81; the sequence is METSTQRTGS…GQESGPSAEK (81 aa). 2 positions are modified to phosphoserine: Ser10 and Ser54. A helical membrane pass occupies residues 82–102; that stretch reads YSVATQLLIGGVTGWCTGFIF. Topologically, residues 103–108 are mitochondrial intermembrane; that stretch reads QKVGKL. The chain crosses the membrane as a helical span at residues 109–129; it reads AATAVGGGFFLLQLANHTGYI. Over 130–165 the chain is Cytoplasmic; that stretch reads KVDWQRVEKDMKKAKEQLKIRKSNQIPTEVKSKAEE. Position 152 is a phosphoserine (Ser152). A helical membrane pass occupies residues 166–186; it reads VVSFVKKNVLVTGGFFGGFLL. Residues 187-190 lie on the Mitochondrial intermembrane side of the membrane; it reads GMAS.

The protein belongs to the FUN14 family.

The protein resides in the mitochondrion outer membrane. Its subcellular location is the nucleus. Its function is as follows. Binds directly and specifically 1,2-Diacyl-sn-glycero-3-phospho-(1'-myo-inositol-3',4',5'-bisphosphate) (PIP3) leading to the recruitment of PIP3 to mitochondria and may play a role in the regulation of the platelet activation via AKT/GSK3B/cGMP signaling pathways. May act as transcription factor that regulates SREBP1 (isoform SREBP-1C) expression in order to modulate triglyceride (TG) homeostasis in hepatocytes. This chain is FUN14 domain-containing protein 2, found in Bos taurus (Bovine).